Reading from the N-terminus, the 261-residue chain is DNA repair protein RecO (261 aa).

The protein belongs to the RecO family.

Functionally, involved in DNA repair and RecF pathway recombination. The sequence is that of DNA repair protein RecO from Pelodictyon phaeoclathratiforme (strain DSM 5477 / BU-1).